The following is a 394-amino-acid chain: MNLLATLERGLADIDAQGLRRRRRIADTACSAHMSVDGREIVGFASNDYLGLAAHPRLIEAFAEGARRYGAGSGGSHLLGGHSRAHAALEDELAAFSGGFSDAPRALYFSTGYMANLAALTALAGRGATIFSDALNHASLIDGTRLSRANVQVYPHGDADALDALLRACDAPTKLIVSDTVFSMDGDVAPLARLVALAEAHGAWLVVDDAHGFGVLGPQGRGALAAHGLRSPNLVYVGTLGKAAGAAGAFIVAHETVIEWLVQRARSYIFTTAAPPSVACAVSASLAVIASDEGDARRAHLAALIERTRAILRATPWQPVDSHTAVQPLVIGSNEATLAAMAALDAQGLWVPAIRPPTVPAGTSRLRISLSAAHSFADLARLEAALVTPIEAAA.

R21 contributes to the substrate binding site. 112–113 (GY) lines the pyridoxal 5'-phosphate pocket. H137 is a binding site for substrate. Pyridoxal 5'-phosphate-binding residues include S183, H211, and T239. Position 242 is an N6-(pyridoxal phosphate)lysine (K242). T358 is a substrate binding site.

This sequence belongs to the class-II pyridoxal-phosphate-dependent aminotransferase family. BioF subfamily. Homodimer. Pyridoxal 5'-phosphate serves as cofactor.

It catalyses the reaction 6-carboxyhexanoyl-[ACP] + L-alanine + H(+) = (8S)-8-amino-7-oxononanoate + holo-[ACP] + CO2. The protein operates within cofactor biosynthesis; biotin biosynthesis. Catalyzes the decarboxylative condensation of pimeloyl-[acyl-carrier protein] and L-alanine to produce 8-amino-7-oxononanoate (AON), [acyl-carrier protein], and carbon dioxide. This is 8-amino-7-oxononanoate synthase from Burkholderia thailandensis (strain ATCC 700388 / DSM 13276 / CCUG 48851 / CIP 106301 / E264).